The chain runs to 372 residues: Flagellar P-ring protein (372 aa).

Residues 1-26 (MNLSSLSFRLLATLLGACVVVAPASA) form the signal peptide.

The protein belongs to the FlgI family. The basal body constitutes a major portion of the flagellar organelle and consists of four rings (L,P,S, and M) mounted on a central rod.

Its subcellular location is the periplasm. It localises to the bacterial flagellum basal body. Its function is as follows. Assembles around the rod to form the L-ring and probably protects the motor/basal body from shearing forces during rotation. The sequence is that of Flagellar P-ring protein from Xanthomonas oryzae pv. oryzae (strain MAFF 311018).